A 297-amino-acid chain; its full sequence is tRNA-cytidine(32) 2-sulfurtransferase (297 aa).

Residues 45-50 carry the PP-loop motif motif; it reads SGGKDS. Residues Cys-120, Cys-123, and Cys-211 each coordinate [4Fe-4S] cluster.

It belongs to the TtcA family. Homodimer. Requires Mg(2+) as cofactor. The cofactor is [4Fe-4S] cluster.

Its subcellular location is the cytoplasm. It catalyses the reaction cytidine(32) in tRNA + S-sulfanyl-L-cysteinyl-[cysteine desulfurase] + AH2 + ATP = 2-thiocytidine(32) in tRNA + L-cysteinyl-[cysteine desulfurase] + A + AMP + diphosphate + H(+). Its pathway is tRNA modification. Its function is as follows. Catalyzes the ATP-dependent 2-thiolation of cytidine in position 32 of tRNA, to form 2-thiocytidine (s(2)C32). The sulfur atoms are provided by the cysteine/cysteine desulfurase (IscS) system. This is tRNA-cytidine(32) 2-sulfurtransferase from Vibrio campbellii (strain ATCC BAA-1116).